Reading from the N-terminus, the 130-residue chain is MAKAAAPRIRKKERKNIISGVAHVLSTFNNTMITISDAQGNAIAWSSSGAQGFKGSRKSTPYAAQVAAEDAGRKAREHGMETLEIEVSGPGSGRESALRALQAVGFNITSIRDMTPVPHNGCRPRKRRRV.

This sequence belongs to the universal ribosomal protein uS11 family. In terms of assembly, part of the 30S ribosomal subunit. Interacts with proteins S7 and S18. Binds to IF-3.

Located on the platform of the 30S subunit, it bridges several disparate RNA helices of the 16S rRNA. Forms part of the Shine-Dalgarno cleft in the 70S ribosome. The protein is Small ribosomal subunit protein uS11 of Gluconobacter oxydans (strain 621H) (Gluconobacter suboxydans).